We begin with the raw amino-acid sequence, 466 residues long: 3-isopropylmalate dehydratase large subunit (466 aa).

Positions 347, 407, and 410 each coordinate [4Fe-4S] cluster.

It belongs to the aconitase/IPM isomerase family. LeuC type 1 subfamily. Heterodimer of LeuC and LeuD. [4Fe-4S] cluster is required as a cofactor.

The catalysed reaction is (2R,3S)-3-isopropylmalate = (2S)-2-isopropylmalate. The protein operates within amino-acid biosynthesis; L-leucine biosynthesis; L-leucine from 3-methyl-2-oxobutanoate: step 2/4. Catalyzes the isomerization between 2-isopropylmalate and 3-isopropylmalate, via the formation of 2-isopropylmaleate. This chain is 3-isopropylmalate dehydratase large subunit, found in Buchnera aphidicola subsp. Diuraphis noxia.